Reading from the N-terminus, the 584-residue chain is Negative regulator of RAS-cAMP pathway (584 aa).

Threonine 25 is modified (phosphothreonine). Disordered regions lie at residues 95 to 167 (PIKP…STTS), 209 to 279 (PLQS…SKTS), 291 to 320 (SEDE…DDYN), 343 to 366 (NLDS…HDPV), and 381 to 432 (SNSN…SLKT). Polar residues-rich tracts occupy residues 114–127 (PPTT…TRPM), 229–254 (CIDN…SFPQ), and 267–278 (NDQNGQLSLSKT). Serine 247 and serine 276 each carry phosphoserine. Over residues 307-320 (FYADEDDEEYDDYN) the composition is skewed to acidic residues. A compositionally biased stretch (polar residues) spans 343–363 (NLDSTKSSVSSANTINSNTSH). A compositionally biased stretch (low complexity) spans 381-392 (SNSNNHNTAHSE). Residues 398 to 432 (VSPTPQSSHSNIGPQPQQNPPSANGIKQQKPSLKT) are compositionally biased toward polar residues. Serine 442 bears the Phosphoserine mark. Residue serine 518 is modified to Phosphoserine; by PKA. The segment at 551-584 (DNTSIANSNGNGNDDTSNQRTEALGRKTSNGGRI) is disordered. Residues 557–568 (NSNGNGNDDTSN) show a composition bias toward low complexity.

The protein resides in the nucleus. In terms of biological role, negative regulator of Ras-cAMP pathway. Involved in transcriptional regulation of galactose-inducible genes. This chain is Negative regulator of RAS-cAMP pathway (MKS1), found in Saccharomyces cerevisiae (strain ATCC 204508 / S288c) (Baker's yeast).